The primary structure comprises 152 residues: Large ribosomal subunit protein uL11 (152 aa).

Belongs to the universal ribosomal protein uL11 family. Part of the ribosomal stalk of the 50S ribosomal subunit. Interacts with L10 and the large rRNA to form the base of the stalk. L10 forms an elongated spine to which L12 dimers bind in a sequential fashion forming a multimeric L10(L12)X complex. In terms of processing, one or more lysine residues are methylated.

Its function is as follows. Forms part of the ribosomal stalk which helps the ribosome interact with GTP-bound translation factors. This Mycoplasmoides gallisepticum (strain R(low / passage 15 / clone 2)) (Mycoplasma gallisepticum) protein is Large ribosomal subunit protein uL11.